The sequence spans 368 residues: tRNA-specific 2-thiouridylase MnmA (368 aa).

ATP is bound by residues 11 to 18 (GMSGGVDS) and M37. Residues 97–99 (NPD) are interaction with target base in tRNA. C102 acts as the Nucleophile in catalysis. C102 and C199 form a disulfide bridge. Residue G127 coordinates ATP. An interaction with tRNA region spans residues 149-151 (KDQ). Residue C199 is the Cysteine persulfide intermediate of the active site. The interaction with tRNA stretch occupies residues 311-312 (RY).

Belongs to the MnmA/TRMU family. Interacts with TusE.

The protein resides in the cytoplasm. The catalysed reaction is S-sulfanyl-L-cysteinyl-[protein] + uridine(34) in tRNA + AH2 + ATP = 2-thiouridine(34) in tRNA + L-cysteinyl-[protein] + A + AMP + diphosphate + H(+). Catalyzes the 2-thiolation of uridine at the wobble position (U34) of tRNA(Lys), tRNA(Glu) and tRNA(Gln), leading to the formation of s(2)U34, the first step of tRNA-mnm(5)s(2)U34 synthesis. Sulfur is provided by IscS, via a sulfur-relay system. Binds ATP and its substrate tRNAs. The polypeptide is tRNA-specific 2-thiouridylase MnmA (Escherichia coli O157:H7).